Reading from the N-terminus, the 556-residue chain is Formate--tetrahydrofolate ligase (556 aa).

Thr-65 to Thr-72 serves as a coordination point for ATP.

The protein belongs to the formate--tetrahydrofolate ligase family.

The enzyme catalyses (6S)-5,6,7,8-tetrahydrofolate + formate + ATP = (6R)-10-formyltetrahydrofolate + ADP + phosphate. It participates in one-carbon metabolism; tetrahydrofolate interconversion. The protein is Formate--tetrahydrofolate ligase of Ruminiclostridium cellulolyticum (strain ATCC 35319 / DSM 5812 / JCM 6584 / H10) (Clostridium cellulolyticum).